A 516-amino-acid chain; its full sequence is L-amino-acid oxidase (516 aa).

The N-terminal stretch at 1 to 18 is a signal peptide; that stretch reads MNVFFMFSLLFLAALGSC. Cys-28 and Cys-191 are joined by a disulfide. FAD-binding positions include 61–62, 81–82, Arg-89, and 105–108; these read MS, EA, and GPMR. Arg-108 contacts substrate. An N-linked (GlcNAc...) asparagine glycan is attached at Asn-190. Residue His-241 participates in substrate binding. Val-279 contributes to the FAD binding site. Residues Cys-349 and Cys-430 are joined by a disulfide bond. A glycan (N-linked (GlcNAc...) asparagine) is linked at Asn-379. A substrate-binding site is contributed by Tyr-390. Residues Glu-475, 481–486, and 482–487 each bind FAD; these read HGWIDS and GWIDSS. Substrate is bound by residues 481 to 482 and 482 to 483; these read HG and GW.

The protein belongs to the flavin monoamine oxidase family. FIG1 subfamily. In terms of assembly, homodimer; non-covalently linked. Requires FAD as cofactor. N-glycosylated. In terms of tissue distribution, expressed by the venom gland.

Its subcellular location is the secreted. The enzyme catalyses an L-alpha-amino acid + O2 + H2O = a 2-oxocarboxylate + H2O2 + NH4(+). Catalyzes an oxidative deamination of predominantly hydrophobic and aromatic L-amino acids, thus producing hydrogen peroxide that may contribute to the diverse toxic effects of this enzyme. Exhibits diverse biological activities, such as hemorrhage, hemolysis, edema, apoptosis of vascular endothelial cells or tumor cell lines, antibacterial and antiparasitic activities, as well as regulation of platelet aggregation. Effects of snake L-amino oxidases on platelets are controversial, since they either induce aggregation or inhibit agonist-induced aggregation. These different effects are probably due to different experimental conditions. Displays dose-dependent inhibition on HIV-1 infection and replication. This is L-amino-acid oxidase from Trimeresurus stejnegeri (Chinese green tree viper).